The primary structure comprises 367 residues: B2 bradykinin receptor (367 aa).

The Extracellular portion of the chain corresponds to 1 to 36 (MLNLTSQVPEPALNGTLPQSSSCFHSDWWNWLNTIQ). N-linked (GlcNAc...) asparagine glycans are attached at residues asparagine 3 and asparagine 14. A helical membrane pass occupies residues 37–60 (APFLWVLFLLAALENIFVLSVFCL). Topologically, residues 61 to 69 (HKNSCTVAE) are cytoplasmic. A helical transmembrane segment spans residues 70 to 94 (IYLGNLAMADLILALGLPFWAITIA). Over 95-107 (NHFDWLFGEVLCR) the chain is Extracellular. Cysteine 106 and cysteine 187 are oxidised to a cystine. The chain crosses the membrane as a helical span at residues 108 to 129 (VVNTMIYMNLYSSICFLMLVSI). The Cytoplasmic portion of the chain corresponds to 130 to 151 (DRYLALVKTMSMGRMRGVRWAK). At tyrosine 132 the chain carries Phosphotyrosine. Residues 152-174 (LYSLVIWGCTLLLSSPMLAFRTM) form a helical membrane-spanning segment. Over 175–197 (HEYAAEGHNVTACIIKYPSRSWM) the chain is Extracellular. N-linked (GlcNAc...) asparagine glycosylation occurs at asparagine 183. A helical membrane pass occupies residues 198-224 (VFTNILLNSVGFLLPLSIITYCTVQIL). The Cytoplasmic segment spans residues 225–243 (QVLRNNEMQKFKEIQTERK). Residues 244–268 (ATVLVLAVLLLFVVCWLPFQISTFL) traverse the membrane as a helical segment. Topologically, residues 269-287 (DTLLRLGVLSGCWDEHAVD) are extracellular. A helical transmembrane segment spans residues 288-311 (VITQISSYVAYSNSGLNPLVYVIV). The Cytoplasmic portion of the chain corresponds to 312–367 (GKRFRKKSREVYRVLCQKGGCMGEPVQMENSMGTLRTSISVERQIHKLQDWAGKKQ). A Phosphotyrosine modification is found at tyrosine 323. Cysteine 327 is lipidated: S-palmitoyl cysteine. Serine 342 is modified (phosphoserine). Threonine 345 carries the phosphothreonine modification. Phosphoserine; by GRK6 occurs at positions 349 and 351.

The protein belongs to the G-protein coupled receptor 1 family. Bradykinin receptor subfamily. BDKRB2 sub-subfamily. As to quaternary structure, forms a complex with PECAM1 and GNAQ. Interacts with PECAM1.

The protein resides in the cell membrane. Receptor for bradykinin. It is associated with G proteins that activate a phosphatidylinositol-calcium second messenger system. The protein is B2 bradykinin receptor (BDKRB2) of Sus scrofa (Pig).